The primary structure comprises 239 residues: Ribonuclease PH (239 aa).

Phosphate-binding positions include arginine 86 and 124–126 (GTR).

It belongs to the RNase PH family. As to quaternary structure, homohexameric ring arranged as a trimer of dimers.

The enzyme catalyses tRNA(n+1) + phosphate = tRNA(n) + a ribonucleoside 5'-diphosphate. Phosphorolytic 3'-5' exoribonuclease that plays an important role in tRNA 3'-end maturation. Removes nucleotide residues following the 3'-CCA terminus of tRNAs; can also add nucleotides to the ends of RNA molecules by using nucleoside diphosphates as substrates, but this may not be physiologically important. Probably plays a role in initiation of 16S rRNA degradation (leading to ribosome degradation) during starvation. The protein is Ribonuclease PH of Rickettsia bellii (strain RML369-C).